The primary structure comprises 98 residues: Homeobox protein SMOX-4 (98 aa).

Residues 37 to 96 constitute a DNA-binding region (homeobox); it reads SFRNRTAFTDYQLICLEREFSHIQYLSRIDRIHLAQNLNLTEKQVKIWFQNRRVRWRKRN.

Its subcellular location is the nucleus. This chain is Homeobox protein SMOX-4 (SMOX-4), found in Schistosoma mansoni (Blood fluke).